We begin with the raw amino-acid sequence, 156 residues long: Cyclic pyranopterin monophosphate synthase (156 aa).

Substrate is bound by residues 73-75 and 110-111; these read LCH and ME. The active site involves Asp125.

This sequence belongs to the MoaC family. As to quaternary structure, homohexamer; trimer of dimers.

The catalysed reaction is (8S)-3',8-cyclo-7,8-dihydroguanosine 5'-triphosphate = cyclic pyranopterin phosphate + diphosphate. The protein operates within cofactor biosynthesis; molybdopterin biosynthesis. In terms of biological role, catalyzes the conversion of (8S)-3',8-cyclo-7,8-dihydroguanosine 5'-triphosphate to cyclic pyranopterin monophosphate (cPMP). This is Cyclic pyranopterin monophosphate synthase from Stutzerimonas stutzeri (strain A1501) (Pseudomonas stutzeri).